Here is a 181-residue protein sequence, read N- to C-terminus: NADH-quinone oxidoreductase subunit 2 (181 aa).

Residues Cys-83, Ser-87, Cys-88, Cys-124, and Cys-128 each contribute to the [2Fe-2S] cluster site. An intrachain disulfide couples Cys-144 to Cys-172.

This sequence belongs to the complex I 24 kDa subunit family. In terms of assembly, NDH-1 is composed of 15 different subunits, Nqo1 to Nqo15. The complex has a L-shaped structure, with the hydrophobic arm (subunits Nqo7, Nqo8 and Nqo10 to Nqo14) embedded in the membrane and the hydrophilic peripheral arm (subunits Nqo1 to Nqo6, Nqo9 and Nqo15) protruding into the bacterial cytoplasm. The hydrophilic domain contains all the redox centers. Requires [2Fe-2S] cluster as cofactor.

It localises to the cell membrane. It carries out the reaction a quinone + NADH + 5 H(+)(in) = a quinol + NAD(+) + 4 H(+)(out). In terms of biological role, NDH-1 shuttles electrons from NADH, via FMN and iron-sulfur (Fe-S) centers, to quinones in the respiratory chain. The immediate electron acceptor for the enzyme in this species is menaquinone. Couples the redox reaction to proton translocation (for every two electrons transferred, four hydrogen ions are translocated across the cytoplasmic membrane), and thus conserves the redox energy in a proton gradient required for the synthesis of ATP. The protein is NADH-quinone oxidoreductase subunit 2 (nqo2) of Thermus thermophilus (strain ATCC 27634 / DSM 579 / HB8).